A 211-amino-acid chain; its full sequence is Large ribosomal subunit protein uL3 (211 aa).

It belongs to the universal ribosomal protein uL3 family. Part of the 50S ribosomal subunit. Forms a cluster with proteins L14 and L19.

One of the primary rRNA binding proteins, it binds directly near the 3'-end of the 23S rRNA, where it nucleates assembly of the 50S subunit. The sequence is that of Large ribosomal subunit protein uL3 from Akkermansia muciniphila (strain ATCC BAA-835 / DSM 22959 / JCM 33894 / BCRC 81048 / CCUG 64013 / CIP 107961 / Muc).